The following is a 261-amino-acid chain: 14-3-3 protein 9 (261 aa).

Positions 239 to 261 are disordered; sequence PEDAEDAQKGDATNKAGGGEDAE.

Belongs to the 14-3-3 family. Homodimer.

The protein is 14-3-3 protein 9 (TFT9) of Solanum lycopersicum (Tomato).